The primary structure comprises 199 residues: MIKVKICGLKRDEDIKCVNRYKPDYVGFVFSKSKRQVNLEQAKMLIANLDSSIKSVGVFVDEALEYVYNTSKILALDVIQFHGLEDEEYMRHFNEFTIWKALKVRCREDILNLNYKYADGIVLDNKTAGSGKCFDWDIARHIKIKKDLILAGGINEENVETAAYIVNPDIVDVSSGVESQGYKDSSKIKMFIEKVRNIK.

This sequence belongs to the TrpF family.

The enzyme catalyses N-(5-phospho-beta-D-ribosyl)anthranilate = 1-(2-carboxyphenylamino)-1-deoxy-D-ribulose 5-phosphate. Its pathway is amino-acid biosynthesis; L-tryptophan biosynthesis; L-tryptophan from chorismate: step 3/5. In Clostridium kluyveri (strain NBRC 12016), this protein is N-(5'-phosphoribosyl)anthranilate isomerase.